We begin with the raw amino-acid sequence, 198 residues long: Peptide deformylase (198 aa).

2 residues coordinate Fe cation: Cys123 and His167. Residue Glu168 is part of the active site. Residue His171 participates in Fe cation binding.

Belongs to the polypeptide deformylase family. The cofactor is Fe(2+).

It catalyses the reaction N-terminal N-formyl-L-methionyl-[peptide] + H2O = N-terminal L-methionyl-[peptide] + formate. Removes the formyl group from the N-terminal Met of newly synthesized proteins. Requires at least a dipeptide for an efficient rate of reaction. N-terminal L-methionine is a prerequisite for activity but the enzyme has broad specificity at other positions. The protein is Peptide deformylase of Ureaplasma parvum serovar 3 (strain ATCC 27815 / 27 / NCTC 11736).